The sequence spans 101 residues: Urease subunit beta (101 aa).

This sequence belongs to the urease beta subunit family. Heterotrimer of UreA (gamma), UreB (beta) and UreC (alpha) subunits. Three heterotrimers associate to form the active enzyme.

The protein resides in the cytoplasm. The catalysed reaction is urea + 2 H2O + H(+) = hydrogencarbonate + 2 NH4(+). It participates in nitrogen metabolism; urea degradation; CO(2) and NH(3) from urea (urease route): step 1/1. This Burkholderia orbicola (strain MC0-3) protein is Urease subunit beta.